The chain runs to 163 residues: Ribosome maturation factor RimM (163 aa).

Positions valine 90 to leucine 155 constitute a PRC barrel domain.

It belongs to the RimM family. In terms of assembly, binds ribosomal protein uS19.

Its subcellular location is the cytoplasm. Its function is as follows. An accessory protein needed during the final step in the assembly of 30S ribosomal subunit, possibly for assembly of the head region. Essential for efficient processing of 16S rRNA. May be needed both before and after RbfA during the maturation of 16S rRNA. It has affinity for free ribosomal 30S subunits but not for 70S ribosomes. In Neorickettsia sennetsu (strain ATCC VR-367 / Miyayama) (Ehrlichia sennetsu), this protein is Ribosome maturation factor RimM.